Consider the following 183-residue polypeptide: Ribosome rescue factor SmrB (183 aa).

Positions 98-173 constitute a Smr domain; sequence LDLHGLTQLQ…GDAALLVLIE (76 aa).

Belongs to the SmrB family. In terms of assembly, associates with collided ribosomes, but not with correctly translating polysomes.

In terms of biological role, acts as a ribosome collision sensor. Detects stalled/collided disomes (pairs of ribosomes where the leading ribosome is stalled and a second ribosome has collided with it) and endonucleolytically cleaves mRNA at the 5' boundary of the stalled ribosome. Stalled/collided disomes form a new interface (primarily via the 30S subunits) that binds SmrB. Cleaved mRNA becomes available for tmRNA ligation, leading to ribosomal subunit dissociation and rescue of stalled ribosomes. The polypeptide is Ribosome rescue factor SmrB (Escherichia fergusonii (strain ATCC 35469 / DSM 13698 / CCUG 18766 / IAM 14443 / JCM 21226 / LMG 7866 / NBRC 102419 / NCTC 12128 / CDC 0568-73)).